A 430-amino-acid polypeptide reads, in one-letter code: tRNA(Ile)-lysidine synthase (430 aa).

21–26 (SGGLDS) is a binding site for ATP.

Belongs to the tRNA(Ile)-lysidine synthase family.

Its subcellular location is the cytoplasm. The enzyme catalyses cytidine(34) in tRNA(Ile2) + L-lysine + ATP = lysidine(34) in tRNA(Ile2) + AMP + diphosphate + H(+). Ligates lysine onto the cytidine present at position 34 of the AUA codon-specific tRNA(Ile) that contains the anticodon CAU, in an ATP-dependent manner. Cytidine is converted to lysidine, thus changing the amino acid specificity of the tRNA from methionine to isoleucine. This Salmonella paratyphi A (strain ATCC 9150 / SARB42) protein is tRNA(Ile)-lysidine synthase.